A 1770-amino-acid chain; its full sequence is Serine/threonine-protein kinase RIM15 (1770 aa).

Positions 334 to 358 (HSLSTFPQDNGNNNNNNNNNNNNNN) are disordered. Residues 343-358 (NGNNNNNNNNNNNNNN) show a composition bias toward low complexity. Phosphoserine occurs at positions 380 and 476. Disordered regions lie at residues 530–563 (TPTA…LDSN) and 583–694 (STIS…NSVL). Polar residues predominate over residues 583–601 (STISIDRDNNTNSRGSSMK). Over residues 611–632 (SRTSNSERPSSSSSRLGIRSRS) the composition is skewed to low complexity. The span at 637-660 (QKIEYSHVDNDDRTNEMLSRDKDS) shows a compositional bias: basic and acidic residues. Low complexity predominate over residues 669–692 (TTITSSTQATTTGTKTNSNNSTNS). Thr-704 is modified (phosphothreonine). A phosphoserine mark is found at Ser-709, Ser-733, Ser-736, and Ser-737. Thr-747 bears the Phosphothreonine mark. Residues 794–1254 (YDILKPISKG…IQEIKDHPYF (461 aa)) form the Protein kinase domain. ATP contacts are provided by residues 800–808 (ISKGAYGSV) and Lys-823. The active-site Proton acceptor is Asp-918. Over residues 970 to 980 (NNFTMNNNNSN) the composition is skewed to low complexity. The segment at 970–1032 (NNFTMNNNNS…MTPTPSTNTV (63 aa)) is disordered. Positions 981-990 (HSQLSTPDSF) are enriched in polar residues. Over residues 1014-1031 (YSSTSNSHSMTPTPSTNT) the composition is skewed to low complexity. Residues Ser-1044, Ser-1048, and Ser-1064 each carry the phosphoserine modification. Position 1075 is a phosphothreonine; by PHO85 (Thr-1075). One can recognise an AGC-kinase C-terminal domain in the interval 1255–1320 (KNVDWDHVYD…NTDVSELSAA (66 aa)). The segment covering 1378–1391 (TGYITPNGTGTTTT) has biased composition (low complexity). Residues 1378 to 1403 (TGYITPNGTGTTTTSAKNSPNLKNLS) are disordered. Positions 1392 to 1401 (SAKNSPNLKN) are enriched in polar residues. Ser-1421 is subject to Phosphoserine. 2 disordered regions span residues 1448–1507 (KSEH…STFG) and 1519–1572 (FSTR…PANT). Over residues 1463–1481 (SSASLMGSSSDGSVSTPGS) the composition is skewed to low complexity. A phosphoserine mark is found at Ser-1531, Ser-1538, Ser-1542, and Ser-1565. The Response regulatory domain occupies 1636–1750 (DVLVCEPIPI…ELKKLVAKYA (115 aa)). Ser-1764 is subject to Phosphoserine.

It belongs to the protein kinase superfamily. Ser/Thr protein kinase family. Interacts with the cyclin-dependent kinase (CDK) PHO85 and IGO1. Autophosphorylated. Phosphorylation by PKA strongly inhibits kinase activity. Phosphorylation by cyclin-CDK PHO80-PHO85 under favorable growth condition causes inactivation of RIM15 by promoting its export to the cytoplasm.

The protein resides in the cytoplasm. It localises to the nucleus. It catalyses the reaction L-seryl-[protein] + ATP = O-phospho-L-seryl-[protein] + ADP + H(+). It carries out the reaction L-threonyl-[protein] + ATP = O-phospho-L-threonyl-[protein] + ADP + H(+). Its activity is regulated as follows. Kinase activity is inhibited by phosphorylation by cAMP-dependent protein kinase (PKA). Its function is as follows. Protein kinase that positively regulates proper entry into stationary phase of cells under nutrient starvation conditions. Involved in glycogen and trehalose accumulation, derepression of stress-induced genes, induction of thermotolerance and starvation resistance, and proper G1 cell cycle arrest. Also involved in the activation of a meiotic genes activation pathway. Phosphorylates IGO1 and IGO2, both involved in the TORC1 control of gene expression and chronological life span. This chain is Serine/threonine-protein kinase RIM15 (RIM15), found in Saccharomyces cerevisiae (strain ATCC 204508 / S288c) (Baker's yeast).